We begin with the raw amino-acid sequence, 212 residues long: Ribosomal RNA small subunit methyltransferase G (212 aa).

Residues Gly80, Leu85, Ala131–Glu132, and Arg146 each bind S-adenosyl-L-methionine.

The protein belongs to the methyltransferase superfamily. RNA methyltransferase RsmG family.

It localises to the cytoplasm. The enzyme catalyses guanosine(527) in 16S rRNA + S-adenosyl-L-methionine = N(7)-methylguanosine(527) in 16S rRNA + S-adenosyl-L-homocysteine. Specifically methylates the N7 position of guanine in position 527 of 16S rRNA. This chain is Ribosomal RNA small subunit methyltransferase G, found in Xanthomonas oryzae pv. oryzae (strain MAFF 311018).